Here is a 289-residue protein sequence, read N- to C-terminus: 4-hydroxybenzoate octaprenyltransferase (289 aa).

8 helical membrane-spanning segments follow: residues 23–43 (IGALLLLWPTLWALWVATPGV), 46–66 (LWILAVFVAGVWLMRAAGCVV), 99–119 (LFVVLVALSFLLVLTLNTMTI), 141–161 (LPQVVLGAAFGWSIPMAFAAV), 163–183 (ESVPLSCWLMFLANILWAVAY), 213–233 (LIIGILQIAVLALMALIGWLN), 234–254 (GLGWGYYWSVLVAGALFVYQQ), and 268–288 (AFMNNNYVGLVLFLGLAMSYV).

This sequence belongs to the UbiA prenyltransferase family. Mg(2+) serves as cofactor.

The protein resides in the cell inner membrane. The catalysed reaction is all-trans-octaprenyl diphosphate + 4-hydroxybenzoate = 4-hydroxy-3-(all-trans-octaprenyl)benzoate + diphosphate. The protein operates within cofactor biosynthesis; ubiquinone biosynthesis. Its function is as follows. Catalyzes the prenylation of para-hydroxybenzoate (PHB) with an all-trans polyprenyl group. Mediates the second step in the final reaction sequence of ubiquinone-8 (UQ-8) biosynthesis, which is the condensation of the polyisoprenoid side chain with PHB, generating the first membrane-bound Q intermediate 3-octaprenyl-4-hydroxybenzoate. The polypeptide is 4-hydroxybenzoate octaprenyltransferase (Citrobacter koseri (strain ATCC BAA-895 / CDC 4225-83 / SGSC4696)).